The following is a 599-amino-acid chain: Interleukin-18 receptor accessory protein (599 aa).

Residues M1–G19 form the signal peptide. Residues F20 to R356 lie on the Extracellular side of the membrane. 3 N-linked (GlcNAc...) asparagine glycosylation sites follow: N21, N119, and N152. A disulfide bridge links C46 with C126. 2 Ig-like C2-type domains span residues P149–R235 and P251–K353. Cystine bridges form between C155-C180, C175-C221, C180-C221, and C273-C337. N345 carries an N-linked (GlcNAc...) asparagine glycan. Residues G357–A377 form a helical membrane-spanning segment. Over S378 to W599 the chain is Cytoplasmic. One can recognise a TIR domain in the interval K406–M559. The active site involves E493.

Belongs to the interleukin-1 receptor family. As to quaternary structure, forms a ternary complex with IL18 and IL18R1. Within this complex, IL18R1 is involved in ligand-binding and IL18RAP in signaling leading to NF-kappa-B and JNK activation. In terms of processing, N-glycosylated. As to expression, detected in adrenal gland, bone marrow, brain, fetal brain, fetal liver, heart, kidney, lung, liver, peripheral blood leukocytes, placenta, prostate, salivary gland, skeletal muscle, spinal cord, testis, thymus, thyroid, trachea and uterus. Strongly expressed in peripheral blood leukocytes and spleen and, to a lesser extent, in colon. Specifically coexpressed with IL18R1 in T-helper 1 (Th1)cells.

It is found in the cell membrane. It carries out the reaction NAD(+) + H2O = ADP-D-ribose + nicotinamide + H(+). In terms of biological role, within the IL18 receptor complex, does not mediate IL18-binding, but involved in IL18-dependent signal transduction, leading to NF-kappa-B and JNK activation. May play a role in IL18-mediated IFNG synthesis from T-helper 1 (Th1) cells. The polypeptide is Interleukin-18 receptor accessory protein (Homo sapiens (Human)).